A 255-amino-acid chain; its full sequence is Indole-3-glycerol phosphate synthase (255 aa).

This sequence belongs to the TrpC family.

The catalysed reaction is 1-(2-carboxyphenylamino)-1-deoxy-D-ribulose 5-phosphate + H(+) = (1S,2R)-1-C-(indol-3-yl)glycerol 3-phosphate + CO2 + H2O. The protein operates within amino-acid biosynthesis; L-tryptophan biosynthesis; L-tryptophan from chorismate: step 4/5. The sequence is that of Indole-3-glycerol phosphate synthase from Streptococcus pneumoniae (strain Hungary19A-6).